We begin with the raw amino-acid sequence, 1097 residues long: Nitric oxide synthase-like protein (1097 aa).

Cys77 is a heme b binding site. 5 residues coordinate L-arginine: Gln140, Trp249, Tyr250, Glu254, and Asn259. 2 residues coordinate (6R)-L-erythro-5,6,7,8-tetrahydrobiopterin: Trp340 and Phe353. Tyr368 is a binding site for heme b. The tract at residues 387-410 (KRPINRKFHFKQIARAVKFTSKLF) is calmodulin-binding. A Flavodoxin-like domain is found at 420–615 (ATVLYATETG…AFRKWASSVF (196 aa)). Residues 426 to 430 (TETGK) and 561 to 592 (VFAL…ERIH) each bind FMN. One can recognise an FAD-binding FR-type domain in the interval 669-914 (KQFVSCTVKA…IRSAPNFHLP (246 aa)). FAD is bound by residues 704-715 (YNPGDHVGIIAC) and 847-857 (LQPRFYSISSS). NADP(+) is bound by residues 922 to 940 (ILIG…WHHR) and 1019 to 1034 (GAHF…AEDV).

It belongs to the NOS family. Heme b is required as a cofactor. FAD serves as cofactor. It depends on FMN as a cofactor.

The catalysed reaction is 2 L-arginine + 3 NADPH + 4 O2 + H(+) = 2 L-citrulline + 2 nitric oxide + 3 NADP(+) + 4 H2O. Functionally, produces nitric oxide (NO) which is a messenger molecule with diverse functions throughout the body. This Bombyx mori (Silk moth) protein is Nitric oxide synthase-like protein.